The primary structure comprises 281 residues: 3-hydroxyanthranilate 3,4-dioxygenase (281 aa).

Positions M1 to G162 are domain A (catalytic). Position 45 (R45) interacts with O2. Fe cation-binding residues include H49, E55, and H93. E55 serves as a coordination point for substrate. Positions 97 and 107 each coordinate substrate. A linker region spans residues K163 to L179. The domain B stretch occupies residues P180 to A281.

The protein belongs to the 3-HAO family. Fe(2+) is required as a cofactor.

Its subcellular location is the cytoplasm. It catalyses the reaction 3-hydroxyanthranilate + O2 = (2Z,4Z)-2-amino-3-carboxymuconate 6-semialdehyde. The protein operates within cofactor biosynthesis; NAD(+) biosynthesis; quinolinate from L-kynurenine: step 3/3. Its function is as follows. Catalyzes the oxidative ring opening of 3-hydroxyanthranilate to 2-amino-3-carboxymuconate semialdehyde, which spontaneously cyclizes to quinolinate. The polypeptide is 3-hydroxyanthranilate 3,4-dioxygenase (haao-1) (Caenorhabditis elegans).